A 286-amino-acid chain; its full sequence is Transcriptional regulator of yeast form adherence 4 (286 aa).

2 stretches are compositionally biased toward low complexity: residues 1–29 (MSLPMSPVSPINTTTSTSTTTTPLSPPSS) and 37–65 (LSTSISNNSITSDSSLDSNTSTSSTTTTN). The segment at 1-71 (MSLPMSPVSP…TTTNYGTKTP (71 aa)) is disordered. 2 consecutive C2H2-type zinc fingers follow at residues 78–101 (FNCTLCQRAFTREEHLTRHTLSTH) and 107–130 (FTCGICSRPFSRRDLLLRHAKNLH). A disordered region spans residues 146 to 260 (HCNKDNDSKS…ITNSSTSHIH (115 aa)). 2 stretches are compositionally biased toward low complexity: residues 156–165 (GSDSNTNKTN) and 228–244 (SVPSTTTTSTTTVPTST). A compositionally biased stretch (polar residues) spans 245–260 (NNDTASITNSSTSHIH).

The protein localises to the nucleus. Its function is as follows. Transcription factor required for yeast cell adherence to silicone substrate. The sequence is that of Transcriptional regulator of yeast form adherence 4 (TRY4) from Candida albicans (strain SC5314 / ATCC MYA-2876) (Yeast).